The following is a 935-amino-acid chain: Protein translocase subunit SecA (935 aa).

Residues Q90, G108 to T112, and D504 contribute to the ATP site. Positions G543–F568 are disordered.

It belongs to the SecA family. Monomer and homodimer. Part of the essential Sec protein translocation apparatus which comprises SecA, SecYEG and auxiliary proteins SecDF. Other proteins may also be involved.

The protein localises to the cell inner membrane. It localises to the cellular thylakoid membrane. It is found in the cytoplasm. It catalyses the reaction ATP + H2O + cellular proteinSide 1 = ADP + phosphate + cellular proteinSide 2.. In terms of biological role, part of the Sec protein translocase complex. Interacts with the SecYEG preprotein conducting channel. Has a central role in coupling the hydrolysis of ATP to the transfer of proteins into and across the cell membrane, serving as an ATP-driven molecular motor driving the stepwise translocation of polypeptide chains across the membrane. Functionally, probably participates in protein translocation into and across both the cytoplasmic and thylakoid membranes in cyanobacterial cells. The sequence is that of Protein translocase subunit SecA from Rippkaea orientalis (strain PCC 8801 / RF-1) (Cyanothece sp. (strain PCC 8801)).